A 154-amino-acid chain; its full sequence is Transcriptional repressor NrdR (154 aa).

Residues 3-34 fold into a zinc finger; sequence CPFCGANDTKVIDSRLVAEGEQVRRRRECLAC. The 91-residue stretch at 49–139 folds into the ATP-cone domain; that stretch reads PRLIKTDGSR…VYRRFQDLNE (91 aa).

This sequence belongs to the NrdR family. Zn(2+) is required as a cofactor.

In terms of biological role, negatively regulates transcription of bacterial ribonucleotide reductase nrd genes and operons by binding to NrdR-boxes. The protein is Transcriptional repressor NrdR of Pseudomonas fluorescens (strain ATCC BAA-477 / NRRL B-23932 / Pf-5).